The following is a 348-amino-acid chain: WD repeat-containing protein JIP5 (348 aa).

7 WD repeats span residues 5 to 44 (KLKN…GETS), 51 to 90 (PSKR…MTRE), 94 to 132 (AHEC…SIRT), 135 to 174 (QHFD…STPL), 179 to 218 (DQED…ADSV), 223 to 261 (GHPA…FLGV), and 264 to 304 (THEE…EDSD). Acidic residues predominate over residues 299–318 (LFEDSDEDDEMEEDEPDSDE). The tract at residues 299–348 (LFEDSDEDDEMEEDEPDSDEEKSKKKKKDNGMKDMSRGQAENDGSFFADL) is disordered.

This sequence belongs to the WD repeat WDR55 family.

The protein localises to the nucleus. It is found in the nucleolus. This chain is WD repeat-containing protein JIP5 (JIP5), found in Cryptococcus neoformans var. neoformans serotype D (strain JEC21 / ATCC MYA-565) (Filobasidiella neoformans).